A 52-amino-acid polypeptide reads, in one-letter code: Large ribosomal subunit protein bL33A (52 aa).

It belongs to the bacterial ribosomal protein bL33 family.

In Staphylococcus aureus (strain USA300), this protein is Large ribosomal subunit protein bL33A.